The following is a 393-amino-acid chain: Pectate lyase A (393 aa).

A signal peptide spans 1-32; that stretch reads MMNKASGRSFTRSSKYLLATLIAGMMASGVSA. Ca(2+)-binding residues include glutamate 174, aspartate 176, aspartate 216, and aspartate 220. The active site involves arginine 273. The cysteines at positions 330 and 358 are disulfide-linked.

It belongs to the polysaccharide lyase 1 family. PLADES subfamily. Ca(2+) serves as cofactor.

It is found in the secreted. It catalyses the reaction Eliminative cleavage of (1-&gt;4)-alpha-D-galacturonan to give oligosaccharides with 4-deoxy-alpha-D-galact-4-enuronosyl groups at their non-reducing ends.. Its pathway is glycan metabolism; pectin degradation; 2-dehydro-3-deoxy-D-gluconate from pectin: step 2/5. Functionally, involved in maceration and soft-rotting of plant tissue. In Dickeya chrysanthemi (Pectobacterium chrysanthemi), this protein is Pectate lyase A (pelA).